The chain runs to 306 residues: Agmatinase (306 aa).

The Mn(2+) site is built by His126, Asp149, His151, Asp153, Asp230, and Asp232.

This sequence belongs to the arginase family. Agmatinase subfamily. It depends on Mn(2+) as a cofactor.

The enzyme catalyses agmatine + H2O = urea + putrescine. It participates in amine and polyamine biosynthesis; putrescine biosynthesis via agmatine pathway; putrescine from agmatine: step 1/1. Catalyzes the formation of putrescine from agmatine. This chain is Agmatinase, found in Escherichia coli O9:H4 (strain HS).